The sequence spans 281 residues: Bidirectional sugar transporter SWEET14 (281 aa).

Topologically, residues 1 to 6 are extracellular; sequence MVLTHN. The helical transmembrane segment at 7–27 threads the bilayer; sequence VLAVTFGVLGNIISFIVFLAP. The MtN3/slv 1 domain occupies 11-97; that stretch reads TFGVLGNIIS…ILFITYANKK (87 aa). The Cytoplasmic portion of the chain corresponds to 28–42; that stretch reads VPTFVRICKKKSIEG. A helical transmembrane segment spans residues 43 to 63; sequence FESLPYVSALFSAMLWIYYAL. The Extracellular segment spans residues 64–70; that stretch reads QKDGAGF. Residues 71–91 traverse the membrane as a helical segment; the sequence is LLITINAVGCFIETIYIILFI. Topologically, residues 92 to 104 are cytoplasmic; the sequence is TYANKKARISTLK. Residues 105–125 form a helical membrane-spanning segment; that stretch reads VLGLLNFLGFAAIILVCELLT. Residues 126–132 lie on the Extracellular side of the membrane; the sequence is KGSNREK. A helical membrane pass occupies residues 133 to 153; the sequence is VLGGICVGFSVCVFAAPLSIM. A MtN3/slv 2 domain is found at 133 to 216; it reads VLGGICVGFS…MILYVIFKYY (84 aa). At 154–166 the chain is on the cytoplasmic side; it reads RVVIRTKSVEFMP. Residues 167-187 form a helical membrane-spanning segment; the sequence is FSLSLFLTISAITWLFYGLAI. The Extracellular portion of the chain corresponds to 188 to 192; that stretch reads KDFYV. A helical membrane pass occupies residues 193–213; it reads ALPNILGAFLGAVQMILYVIF. At 214–281 the chain is on the cytoplasmic side; sequence KYYKTPLVVD…EDQMDKKMPN (68 aa). The span at 244-259 shows a compositional bias: polar residues; it reads TPASGDLTVQPQTNPD. The disordered stretch occupies residues 244-281; that stretch reads TPASGDLTVQPQTNPDVSHPIKTHGGDLEDQMDKKMPN. Residues 267 to 281 are compositionally biased toward basic and acidic residues; it reads HGGDLEDQMDKKMPN.

Belongs to the SWEET sugar transporter family. In terms of assembly, forms homooligomers and/or heterooligomers.

It is found in the cell membrane. Functionally, mediates both low-affinity uptake and efflux of sugar across the plasma membrane. The polypeptide is Bidirectional sugar transporter SWEET14 (Arabidopsis thaliana (Mouse-ear cress)).